The sequence spans 328 residues: Endochitinase (328 aa).

Positions 1 to 26 (MRRHKEVNFVAYLLFSLLVLVSAALA) are cleaved as a signal peptide. Residues 27-68 (QNCGSQGGGKACASGQCCSKFGWCGNTNDYCGSGNCQSQCPG) enclose the Chitin-binding type-1 domain. Intrachain disulfides connect Cys-29–Cys-44, Cys-38–Cys-50, Cys-43–Cys-57, Cys-62–Cys-66, Cys-100–Cys-162, Cys-174–Cys-182, and Cys-281–Cys-313. Glu-144 functions as the Proton donor in the catalytic mechanism. Residues 322 to 328 (ALLVDTL) constitute a propeptide, removed in mature form.

Belongs to the glycosyl hydrolase 19 family. Chitinase class I subfamily.

The protein localises to the vacuole. The catalysed reaction is Random endo-hydrolysis of N-acetyl-beta-D-glucosaminide (1-&gt;4)-beta-linkages in chitin and chitodextrins.. Defense against chitin-containing fungal pathogens. This Solanum tuberosum (Potato) protein is Endochitinase.